The sequence spans 204 residues: Large ribosomal subunit protein uL4 (204 aa).

The interval 49–76 is disordered; it reads KTKGISDVSGTTAKPYGQKRTGRARQGS.

It belongs to the universal ribosomal protein uL4 family. In terms of assembly, part of the 50S ribosomal subunit.

Functionally, one of the primary rRNA binding proteins, this protein initially binds near the 5'-end of the 23S rRNA. It is important during the early stages of 50S assembly. It makes multiple contacts with different domains of the 23S rRNA in the assembled 50S subunit and ribosome. Its function is as follows. Forms part of the polypeptide exit tunnel. The polypeptide is Large ribosomal subunit protein uL4 (Wolbachia sp. subsp. Drosophila simulans (strain wRi)).